The primary structure comprises 297 residues: 4-hydroxybenzoate octaprenyltransferase (297 aa).

The next 9 membrane-spanning stretches (helical) occupy residues 29 to 49 (IGTYLLLWPTLWALWIAAEGV), 55 to 75 (LFIFITGVILMRAAGCVVNDF), 102 to 122 (AWTLFAVLVGLSFGLVLLTNA), 124 to 141 (TVYLSFGALALAACYPFM), 146 to 166 (FYPQVVLGAAFSWGMPMAFTA), 169 to 189 (GSLPPEAWLLFIANLLWTVAY), 219 to 239 (VIIVTLQGLALFCLLLAGVRF), 241 to 261 (LGQWFHLGLVIAAGCFAWEFW), and 270 to 290 (VCFKAFLHNHWAGLAILAGIV).

The protein belongs to the UbiA prenyltransferase family. Mg(2+) is required as a cofactor.

It localises to the cell inner membrane. The enzyme catalyses all-trans-octaprenyl diphosphate + 4-hydroxybenzoate = 4-hydroxy-3-(all-trans-octaprenyl)benzoate + diphosphate. The protein operates within cofactor biosynthesis; ubiquinone biosynthesis. Its function is as follows. Catalyzes the prenylation of para-hydroxybenzoate (PHB) with an all-trans polyprenyl group. Mediates the second step in the final reaction sequence of ubiquinone-8 (UQ-8) biosynthesis, which is the condensation of the polyisoprenoid side chain with PHB, generating the first membrane-bound Q intermediate 3-octaprenyl-4-hydroxybenzoate. The protein is 4-hydroxybenzoate octaprenyltransferase of Stutzerimonas stutzeri (strain A1501) (Pseudomonas stutzeri).